The following is a 365-amino-acid chain: Alanine racemase (365 aa).

Catalysis depends on K32, which acts as the Proton acceptor; specific for D-alanine. An N6-(pyridoxal phosphate)lysine modification is found at K32. Position 128 (R128) interacts with substrate. Y257 serves as the catalytic Proton acceptor; specific for L-alanine. M305 is a substrate binding site.

This sequence belongs to the alanine racemase family. Requires pyridoxal 5'-phosphate as cofactor.

It carries out the reaction L-alanine = D-alanine. The protein operates within amino-acid biosynthesis; D-alanine biosynthesis; D-alanine from L-alanine: step 1/1. In terms of biological role, catalyzes the interconversion of L-alanine and D-alanine. May also act on other amino acids. This is Alanine racemase (alr) from Francisella philomiragia subsp. philomiragia (strain ATCC 25017 / CCUG 19701 / FSC 153 / O#319-036).